A 1552-amino-acid polypeptide reads, in one-letter code: ABC multidrug transporter lscH (1552 aa).

2 consecutive transmembrane segments (helical) span residues 32-52 (ETIL…IPII) and 68-88 (WFKK…VGLW). N91 carries N-linked (GlcNAc...) asparagine glycosylation. 8 consecutive transmembrane segments (helical) span residues 100-120 (STPS…LSTI), 158-178 (HSAI…MLLL), 280-300 (LFQI…IELA), 311-331 (NGYG…VSVG), 413-433 (AACV…VFLA), 457-477 (ALAS…FSVI), 500-520 (ILSI…FAGI), and 528-548 (LTIA…SPLA). Positions 280–559 (LFQIGFTYAQ…IVQALPQISG (280 aa)) constitute an ABC transmembrane type-1 1 domain. Positions 573–655 (AEERHDPRST…PDANGDSRDA (83 aa)) are disordered. Positions 581 to 602 (STTTGTSPESNNGSQQTLSDKQ) are enriched in polar residues. A glycan (N-linked (GlcNAc...) asparagine) is linked at N592. Residues 639–884 (GHLADTTPDA…AELGWADRDL (246 aa)) enclose the ABC transporter 1 domain. 676 to 683 (GPVGCGKS) provides a ligand contact to ATP. N-linked (GlcNAc...) asparagine glycosylation is found at N719 and N834. The segment covering 887–912 (QQEKPGKDELNHEHGEYSESAPEKLR) has biased composition (basic and acidic residues). Residues 887 to 917 (QQEKPGKDELNHEHGEYSESAPEKLRRSQTN) form a disordered region. The next 2 helical transmembrane spans lie at 957–977 (GWLT…CDSF) and 1005–1025 (AVLG…LFII). The ABC transmembrane type-1 2 domain maps to 963–1241 (IFVIAICVYA…ATITSWVTLE (279 aa)). A glycan (N-linked (GlcNAc...) asparagine) is linked at N1028. A run of 4 helical transmembrane segments spans residues 1076–1096 (AALG…LVCV), 1100–1120 (YMAA…HFYL), 1184–1204 (WITF…IVLT), and 1210–1230 (AIGP…SATM). One can recognise an ABC transporter 2 domain in the interval 1295-1538 (IELDNVTASY…PTSIFKELYL (244 aa)). N-linked (GlcNAc...) asparagine glycosylation is found at N1299 and N1313. 1328-1335 (GRTGSGKS) serves as a coordination point for ATP.

The protein belongs to the ABC transporter superfamily. ABCC family. Conjugate transporter (TC 3.A.1.208) subfamily.

It localises to the cell membrane. ABC multidrug transporter; part of the gene cluster that mediates the biosynthesis of the lipopeptide antibiotics leucinostatins that show extensive biological activities, including antimalarial, antiviral, antibacterial, antifungal, and antitumor activities, as well as phytotoxic. May be involved in the efflux of leucinostatins. This Purpureocillium lilacinum (Paecilomyces lilacinus) protein is ABC multidrug transporter lscH.